Reading from the N-terminus, the 118-residue chain is Hydrogenase maturation factor HypA (118 aa).

Histidine 2 lines the Ni(2+) pocket. Zn(2+) contacts are provided by cysteine 73, cysteine 76, cysteine 89, and cysteine 92.

It belongs to the HypA/HybF family.

Its function is as follows. Involved in the maturation of [NiFe] hydrogenases. Required for nickel insertion into the metal center of the hydrogenase. The polypeptide is Hydrogenase maturation factor HypA (Shewanella sp. (strain MR-7)).